A 69-amino-acid chain; its full sequence is uncharacterized protein (69 aa).

The N-terminal stretch at Met-1–Ser-18 is a signal peptide. Residues Arg-17–Val-69 are disordered. Residues Ser-18 to Ser-61 are compositionally biased toward low complexity.

It localises to the secreted. This is an uncharacterized protein from Dictyostelium discoideum (Social amoeba).